The primary structure comprises 349 residues: Protein FAM98C (349 aa).

Positions 313 to 349 (PDRGGRPNELEPPMPTWRSRREDGGPQCWGRKKKKKK) are disordered.

This sequence belongs to the FAM98 family.

This Homo sapiens (Human) protein is Protein FAM98C (FAM98C).